The primary structure comprises 371 residues: L-lysine 4-hydroxylase (371 aa).

Residues histidine 174, glutamate 176, and histidine 310 each contribute to the Fe cation site.

This sequence belongs to the clavaminate synthase family. It depends on Fe(2+) as a cofactor.

The catalysed reaction is L-lysine + 2-oxoglutarate + O2 = (4R)-4-hydroxy-L-lysine + succinate + CO2. Alpha-ketoglutarate-dependent dioxygenase that in vitro catalyzes the regio- and stereoselective hydroxylation of L-lysine, leading to (4R)-4-hydroxy-L-lysine. The sequence is that of L-lysine 4-hydroxylase from Niastella koreensis (strain DSM 17620 / KACC 11465 / NBRC 106392 / GR20-10).